A 478-amino-acid chain; its full sequence is Endoplasmic reticulum oxidoreductin-1 (478 aa).

Positions 1–20 are cleaved as a signal peptide; sequence MREPLLQLIVLSLIIIVVNT. Disulfide bonds link C28–C41, C30–C39, C79–C384, C88–C93, C209–C230, and C387–C390. The interval 117–143 is disordered; the sequence is AAVKEEEDDDAEKCADAGNNIDPMDRT. The FAD site is built by R188, T190, and W201. The FAD site is built by S241, H244, R283, and R295. Residue N377 is glycosylated (N-linked (GlcNAc...) asparagine). The interval 459–478 is disordered; that stretch reads ESVMNTAADGPPRKSNKIDL.

The protein belongs to the EROs family. May function both as a monomer and a homodimer. FAD serves as cofactor.

It localises to the endoplasmic reticulum membrane. Oxidoreductase involved in disulfide bond formation in the endoplasmic reticulum. Efficiently reoxidizes pdi-1, the enzyme catalyzing protein disulfide formation, in order to allow pdi-1 to sustain additional rounds of disulfide formation. Following pdi reoxidation, passes its electrons to molecular oxygen via FAD, leading to the production of reactive oxygen species (ROS) in the cell. The chain is Endoplasmic reticulum oxidoreductin-1 (ero-1) from Caenorhabditis elegans.